Reading from the N-terminus, the 756-residue chain is Catalase-peroxidase (756 aa).

The signal sequence occupies residues 1 to 26 (MKGKTVNKQTLAALVSALLVFNPAVA). The tryptophyl-tyrosyl-methioninium (Trp-Tyr) (with M-274) cross-link spans 126-248 (WHSAGTYRTL…LGATHMGLIY (123 aa)). H127 functions as the Proton acceptor in the catalytic mechanism. The tryptophyl-tyrosyl-methioninium (Tyr-Met) (with W-126) cross-link spans 248-274 (YVNPEGPKGVPDPLGSAKNIRTAFSRM). H289 lines the heme b pocket.

The protein belongs to the peroxidase family. Peroxidase/catalase subfamily. As to quaternary structure, homodimer or homotetramer. It depends on heme b as a cofactor. Post-translationally, formation of the three residue Trp-Tyr-Met cross-link is important for the catalase, but not the peroxidase activity of the enzyme.

The enzyme catalyses H2O2 + AH2 = A + 2 H2O. It catalyses the reaction 2 H2O2 = O2 + 2 H2O. Functionally, bifunctional enzyme with both catalase and broad-spectrum peroxidase activity. The protein is Catalase-peroxidase of Shewanella loihica (strain ATCC BAA-1088 / PV-4).